We begin with the raw amino-acid sequence, 284 residues long: Phosphatidylglycerol--prolipoprotein diacylglyceryl transferase (284 aa).

7 helical membrane passes run Ile19–Leu39, Leu60–Tyr80, Gly98–Tyr118, Phe130–Gly150, Gln199–Cys219, Gly225–Phe245, and Phe258–Tyr278. An a 1,2-diacyl-sn-glycero-3-phospho-(1'-sn-glycerol)-binding site is contributed by Arg143.

It belongs to the Lgt family.

It is found in the cell inner membrane. The enzyme catalyses L-cysteinyl-[prolipoprotein] + a 1,2-diacyl-sn-glycero-3-phospho-(1'-sn-glycerol) = an S-1,2-diacyl-sn-glyceryl-L-cysteinyl-[prolipoprotein] + sn-glycerol 1-phosphate + H(+). Its pathway is protein modification; lipoprotein biosynthesis (diacylglyceryl transfer). Its function is as follows. Catalyzes the transfer of the diacylglyceryl group from phosphatidylglycerol to the sulfhydryl group of the N-terminal cysteine of a prolipoprotein, the first step in the formation of mature lipoproteins. This is Phosphatidylglycerol--prolipoprotein diacylglyceryl transferase from Blochmanniella floridana.